We begin with the raw amino-acid sequence, 215 residues long: Large ribosomal subunit protein uL3 (215 aa).

Positions 136–155 are disordered; it reads GVSISHRSHGSTGQRQDPGK. Q151 carries the post-translational modification N5-methylglutamine.

The protein belongs to the universal ribosomal protein uL3 family. As to quaternary structure, part of the 50S ribosomal subunit. Forms a cluster with proteins L14 and L19. Methylated by PrmB.

Its function is as follows. One of the primary rRNA binding proteins, it binds directly near the 3'-end of the 23S rRNA, where it nucleates assembly of the 50S subunit. The polypeptide is Large ribosomal subunit protein uL3 (Rickettsia conorii (strain ATCC VR-613 / Malish 7)).